A 239-amino-acid polypeptide reads, in one-letter code: Cysteine-rich venom protein (239 aa).

Residues 1–18 (MIVFILLSLAAVLQQSVA) form the signal peptide. The region spanning 37 to 165 (VDMHNSFRRS…PYNYFYVCQY (129 aa)) is the SCP domain. Disulfide bonds link Cys74–Cys152, Cys91–Cys166, Cys147–Cys163, Cys185–Cys192, Cys188–Cys197, Cys210–Cys228, and Cys219–Cys232. The 34-residue stretch at 201 to 234 (CPINNVFTNCDSLLQQSSCEDSYITTNCGASCFC) folds into the ShKT domain.

The protein belongs to the CRISP family. Expressed by the venom gland.

It localises to the secreted. Functionally, blocks contraction of smooth muscle elicited by high potassium-induced depolarization, but does not block caffeine-stimulated contraction. May target voltage-gated calcium channels on smooth muscle. The sequence is that of Cysteine-rich venom protein from Cerberus rynchops (Dog-faced water snake).